A 315-amino-acid polypeptide reads, in one-letter code: MIKLGIVMDPIAHINIKKDTSFAMLLEAQRRGYELHYMEMADLYLINGEARACTRTLSVEQNYDKWYEFGSEQEIKLADLDVILMRKDPPFDTEFIYATYILERAEEEGTLIVNKPQSLRDCNEKLYTAWFADLTPETLVTRNKAQLKAFWEKHGDIIMKPLDGMGGASIFRVKEGDPNIGVIAETLTELGNRYCMAQNYLPAIKDGDKRVLVVDGEPVPYCLARIPQGGETRGNLAAGGRGEPRPLSESDWEIARRVGPTLKAKGLIFVGLDIIGDRLTEINVTSPTCVREIEAEYPISITGMLMDAIEARLAK.

The region spanning 125 to 310 is the ATP-grasp domain; that stretch reads KLYTAWFADL…ITGMLMDAIE (186 aa). ATP is bound at residue 151-207; the sequence is WEKHGDIIMKPLDGMGGASIFRVKEGDPNIGVIAETLTELGNRYCMAQNYLPAIKDG. Mg(2+) is bound by residues Glu-281 and Asn-283.

The protein belongs to the prokaryotic GSH synthase family. Requires Mg(2+) as cofactor. It depends on Mn(2+) as a cofactor.

The enzyme catalyses gamma-L-glutamyl-L-cysteine + glycine + ATP = glutathione + ADP + phosphate + H(+). Its pathway is sulfur metabolism; glutathione biosynthesis; glutathione from L-cysteine and L-glutamate: step 2/2. The protein is Glutathione synthetase of Salmonella typhi.